Reading from the N-terminus, the 1035-residue chain is Sialidase A (1035 aa).

The signal sequence occupies residues 1–53 (MSYFRNRDIDIERNSMNRSVQERKCRYSIRKLSVGAVSMIVGAVVFGTSPVLA). A disordered region spans residues 57 to 112 (ASEQPLANETQLSGESSTLTDTEKSQPSSETELSGNKQEQERKDKQEEKIPRDYYA). Residues 61 to 92 (PLANETQLSGESSTLTDTEKSQPSSETELSGN) are compositionally biased toward polar residues. Residues 94-112 (QEQERKDKQEEKIPRDYYA) show a composition bias toward basic and acidic residues. Residue arginine 347 participates in substrate binding. Aspartate 372 serves as the catalytic Proton acceptor. 3 BNR repeats span residues 381 to 392 (RRSEDNGKTWGD), 539 to 550 (SYSDDDGKTWSA), and 607 to 618 (IYSDDHGKTWHA). The active site involves glutamate 647. Arginine 663 contacts substrate. One copy of the BNR 4 repeat lies at 672–683 (ATSKDGGVTWEK). The tract at residues 902 to 951 (GPLGTSGEEPAPTVEKPEYTGPLGTSGEEPAPTVEKPEYTGPLGTAGEEA) is disordered. Residues 1003 to 1007 (LPETG) carry the LPXTG sorting signal motif. The residue at position 1006 (threonine 1006) is a Pentaglycyl murein peptidoglycan amidated threonine. Residues 1007–1035 (GNKESDLLASLGLTAFFLGLFTLGKKREQ) constitute a propeptide, removed by sortase.

This sequence belongs to the glycosyl hydrolase 33 family.

Its subcellular location is the secreted. It is found in the cell wall. The enzyme catalyses Hydrolysis of alpha-(2-&gt;3)-, alpha-(2-&gt;6)-, alpha-(2-&gt;8)- glycosidic linkages of terminal sialic acid residues in oligosaccharides, glycoproteins, glycolipids, colominic acid and synthetic substrates.. The chain is Sialidase A (nanA) from Streptococcus pneumoniae.